The sequence spans 415 residues: Serine/threonine transporter SstT (415 aa).

8 helical membrane passes run 23–43, 47–67, 85–105, 144–164, 181–201, 220–240, 303–323, and 333–353; these read ILVG…AAIA, LGTL…LMLV, ILWL…LFSF, ALLK…GFAL, AVTF…FGLV, LMVL…LIVF, GAAI…GIAV, and VVAS…LLLI.

Belongs to the dicarboxylate/amino acid:cation symporter (DAACS) (TC 2.A.23) family.

The protein localises to the cell inner membrane. It catalyses the reaction L-serine(in) + Na(+)(in) = L-serine(out) + Na(+)(out). The enzyme catalyses L-threonine(in) + Na(+)(in) = L-threonine(out) + Na(+)(out). Its function is as follows. Involved in the import of serine and threonine into the cell, with the concomitant import of sodium (symport system). This Cronobacter sakazakii (strain ATCC BAA-894) (Enterobacter sakazakii) protein is Serine/threonine transporter SstT.